The chain runs to 143 residues: Large ribosomal subunit protein uL11 (143 aa).

Belongs to the universal ribosomal protein uL11 family. As to quaternary structure, part of the ribosomal stalk of the 50S ribosomal subunit. Interacts with L10 and the large rRNA to form the base of the stalk. L10 forms an elongated spine to which L12 dimers bind in a sequential fashion forming a multimeric L10(L12)X complex. Post-translationally, one or more lysine residues are methylated.

Functionally, forms part of the ribosomal stalk which helps the ribosome interact with GTP-bound translation factors. The protein is Large ribosomal subunit protein uL11 of Delftia acidovorans (strain DSM 14801 / SPH-1).